A 274-amino-acid chain; its full sequence is Large ribosomal subunit protein uL2 (274 aa).

Residues 223 to 258 (VAMNPVDHPHGGGEGRTSGGRHPVTPWGIPTKGYKT) are disordered.

The protein belongs to the universal ribosomal protein uL2 family. As to quaternary structure, part of the 50S ribosomal subunit. Forms a bridge to the 30S subunit in the 70S ribosome.

Functionally, one of the primary rRNA binding proteins. Required for association of the 30S and 50S subunits to form the 70S ribosome, for tRNA binding and peptide bond formation. It has been suggested to have peptidyltransferase activity; this is somewhat controversial. Makes several contacts with the 16S rRNA in the 70S ribosome. The sequence is that of Large ribosomal subunit protein uL2 from Pelobacter propionicus (strain DSM 2379 / NBRC 103807 / OttBd1).